Here is a 585-residue protein sequence, read N- to C-terminus: Bestrophin-1 (585 aa).

Residues 1-31 lie on the Cytoplasmic side of the membrane; that stretch reads MTITYTSQVANARLGSFSRLLLCWRGSIYKL. Ala-10 is a Ca(2+) binding site. Residues 32–51 form a helical membrane-spanning segment; it reads LYGEFLIFLLCYYIIRFIYR. Over 52–60 the chain is Extracellular; sequence LALTEEQQL. The helical transmembrane segment at 61–82 threads the bilayer; that stretch reads MFEKLTLYCDSYIQLIPISFVL. Over 83–237 the chain is Cytoplasmic; the sequence is GFYVTLVVTR…DWISIPLVYT (155 aa). A helical membrane pass occupies residues 238–255; the sequence is QVVTVAVYSFFLTCLVGR. The Extracellular segment spans residues 256–274; that stretch reads QFLNPAKAYPGHELDLVVP. Residues 275-288 form a helical membrane-spanning segment; it reads VFTFLQFFFYVGWL. The Cytoplasmic portion of the chain corresponds to 289-585; that stretch reads KVAEQLINPF…ALENRDEAHS (297 aa). Residues Gln-293, Asn-296, Asp-301, and Asp-304 each contribute to the Ca(2+) site. An auto-inhibitory segment region spans residues 346 to 379; it reads PYTAASAQFRRASFMGSTFNISLNKEEMEFQPNQ.

This sequence belongs to the anion channel-forming bestrophin (TC 1.A.46) family. Calcium-sensitive chloride channel subfamily. As to quaternary structure, interacts with YWHAG; this interaction promotes the ligand-gated L-glutamate channel activity leading to the positive regulation of NMDA glutamate receptor activity through the L-glutamate secretion. Predominantly expressed in the basolateral membrane of the retinal pigment epithelium.

The protein resides in the cell membrane. It localises to the basolateral cell membrane. It carries out the reaction chloride(in) = chloride(out). The catalysed reaction is hydrogencarbonate(in) = hydrogencarbonate(out). It catalyses the reaction 4-aminobutanoate(in) = 4-aminobutanoate(out). The enzyme catalyses L-glutamate(out) = L-glutamate(in). Inactivated by sulfhydryl-reactive agents. In terms of biological role, ligand-gated anion channel that allows the movement of anions across cell membranes when activated by calcium (Ca2+). Allows the movement of chloride and hydrogencarbonate. Found in a partially open conformation leading to significantly smaller chloride movement. Upon F2R/PAR-1 activation, the sequestered calcium is released into the cytosol of astrocytes, leading to the (Ca2+)-dependent release of L-glutamate into the synaptic cleft that targets the neuronal postsynaptic GRIN2A/NMDAR receptor resulting in the synaptic plasticity regulation. Upon activation of the norepinephrine-alpha-1 adrenergic receptor signaling pathway, transports as well D-serine than L-glutamate in a (Ca2+)-dependent manner, leading to activation of adjacent NMDAR receptors and therefore regulates the heterosynaptic long-term depression and metaplasticity during initial memory acquisition. Releases the 4-aminobutanoate neurotransmitter in a (Ca2+)-dependent manner, and participates in its tonic release from cerebellar glial cells. This is Bestrophin-1 from Homo sapiens (Human).